The following is a 260-amino-acid chain: Isoprenyl transferase (260 aa).

Residue Asp38 is part of the active site. Asp38 lines the Mg(2+) pocket. Substrate contacts are provided by residues 39-42, Trp43, Arg51, His55, and 83-85; these read GNGR and STE. Asn86 functions as the Proton acceptor in the catalytic mechanism. Substrate contacts are provided by residues Trp87, Arg89, Arg206, and 212-214; that span reads RLS. Glu225 is a binding site for Mg(2+).

It belongs to the UPP synthase family. As to quaternary structure, homodimer. The cofactor is Mg(2+).

Its function is as follows. Catalyzes the condensation of isopentenyl diphosphate (IPP) with allylic pyrophosphates generating different type of terpenoids. In Heliobacterium mobile (Heliobacillus mobilis), this protein is Isoprenyl transferase.